A 210-amino-acid chain; its full sequence is Pyridoxine/pyridoxamine 5'-phosphate oxidase (210 aa).

Residues 7 to 10 (RQSY) and Lys65 contribute to the substrate site. FMN is bound by residues 60–65 (RIVLIK), 75–76 (FT), Arg81, Lys82, and Gln104. Substrate contacts are provided by Tyr122, Arg126, and Ser130. Residues 139-140 (QS) and Trp182 each bind FMN. 188 to 190 (RLH) provides a ligand contact to substrate. Arg192 serves as a coordination point for FMN.

The protein belongs to the pyridoxamine 5'-phosphate oxidase family. In terms of assembly, homodimer. The cofactor is FMN.

The enzyme catalyses pyridoxamine 5'-phosphate + O2 + H2O = pyridoxal 5'-phosphate + H2O2 + NH4(+). The catalysed reaction is pyridoxine 5'-phosphate + O2 = pyridoxal 5'-phosphate + H2O2. The protein operates within cofactor metabolism; pyridoxal 5'-phosphate salvage; pyridoxal 5'-phosphate from pyridoxamine 5'-phosphate: step 1/1. It participates in cofactor metabolism; pyridoxal 5'-phosphate salvage; pyridoxal 5'-phosphate from pyridoxine 5'-phosphate: step 1/1. In terms of biological role, catalyzes the oxidation of either pyridoxine 5'-phosphate (PNP) or pyridoxamine 5'-phosphate (PMP) into pyridoxal 5'-phosphate (PLP). The chain is Pyridoxine/pyridoxamine 5'-phosphate oxidase from Bordetella bronchiseptica (strain ATCC BAA-588 / NCTC 13252 / RB50) (Alcaligenes bronchisepticus).